A 314-amino-acid polypeptide reads, in one-letter code: DNA-directed RNA polymerase subunit alpha (314 aa).

The alpha N-terminal domain (alpha-NTD) stretch occupies residues 1–228 (MIEIEKPRIE…EHLNIFVGLT (228 aa)). An alpha C-terminal domain (alpha-CTD) region spans residues 246–314 (EKVLEMSIEE…DLGLGLRKED (69 aa)).

The protein belongs to the RNA polymerase alpha chain family. As to quaternary structure, homodimer. The RNAP catalytic core consists of 2 alpha, 1 beta, 1 beta' and 1 omega subunit. When a sigma factor is associated with the core the holoenzyme is formed, which can initiate transcription.

It catalyses the reaction RNA(n) + a ribonucleoside 5'-triphosphate = RNA(n+1) + diphosphate. Its function is as follows. DNA-dependent RNA polymerase catalyzes the transcription of DNA into RNA using the four ribonucleoside triphosphates as substrates. This chain is DNA-directed RNA polymerase subunit alpha, found in Staphylococcus aureus (strain Mu3 / ATCC 700698).